We begin with the raw amino-acid sequence, 379 residues long: Diaminopimelate decarboxylase (379 aa).

Lysine 48 carries the post-translational modification N6-(pyridoxal phosphate)lysine. Residues glycine 214 and glutamate 242–arginine 245 each bind pyridoxal 5'-phosphate. Substrate is bound by residues arginine 245, arginine 280, and tyrosine 284. Cysteine 309 functions as the Proton donor in the catalytic mechanism. Positions 310 and 338 each coordinate substrate. Tyrosine 338 serves as a coordination point for pyridoxal 5'-phosphate.

It belongs to the Orn/Lys/Arg decarboxylase class-II family. LysA subfamily. Homodimer. Pyridoxal 5'-phosphate serves as cofactor.

It carries out the reaction meso-2,6-diaminopimelate + H(+) = L-lysine + CO2. It functions in the pathway amino-acid biosynthesis; L-lysine biosynthesis via DAP pathway; L-lysine from DL-2,6-diaminopimelate: step 1/1. Specifically catalyzes the decarboxylation of meso-diaminopimelate (meso-DAP) to L-lysine. This is Diaminopimelate decarboxylase from Deinococcus radiodurans (strain ATCC 13939 / DSM 20539 / JCM 16871 / CCUG 27074 / LMG 4051 / NBRC 15346 / NCIMB 9279 / VKM B-1422 / R1).